Consider the following 219-residue polypeptide: Poxin (219 aa).

The active-site Proton donor is His17. Tyr138 functions as the Shared with catalytic histidine of dimeric partner in the catalytic mechanism. Catalysis depends on Lys142, which acts as the Proton acceptor; shared with catalytic histidine of dimeric partner.

It belongs to the poxin family. In terms of assembly, homodimer.

It catalyses the reaction 2',3'-cGAMP + H2O = Gp(2'-5')Ap(3') + H(+). Its function is as follows. Nuclease that is responsible for viral evasion of host cGAS-STING innate immunity. Cleaves 2',3'-cGAMP which is produced by host cGAS following recognition of cytosolic DNA and blocks the subsequent 2',3'-cGAMP-mediated activation of TMEM173/STING, which normally spreads to adjacent cells and activates the interferon and NF-kappa-B immune responses. This chain is Poxin (OPG188), found in Bos taurus (Bovine).